Here is a 236-residue protein sequence, read N- to C-terminus: Orotidine 5'-phosphate decarboxylase (236 aa).

Substrate-binding positions include D16, K38, 65–74, T123, R184, Q193, G213, and R214; that span reads DLKLHDIGNT. K67 serves as the catalytic Proton donor.

This sequence belongs to the OMP decarboxylase family. Type 1 subfamily. Homodimer.

The enzyme catalyses orotidine 5'-phosphate + H(+) = UMP + CO2. Its pathway is pyrimidine metabolism; UMP biosynthesis via de novo pathway; UMP from orotate: step 2/2. Functionally, catalyzes the decarboxylation of orotidine 5'-monophosphate (OMP) to uridine 5'-monophosphate (UMP). This chain is Orotidine 5'-phosphate decarboxylase, found in Methylobacterium nodulans (strain LMG 21967 / CNCM I-2342 / ORS 2060).